The following is a 1756-amino-acid chain: Protein TIC 214 (1756 aa).

A run of 6 helical transmembrane segments spans residues 18–38, 54–74, 79–99, 128–148, 163–183, and 210–230; these read VSGP…LPFG, GYGI…FLSM, IYAA…YMFF, LFMD…NPVL, ISFM…LTIF, and FSLL…LPFL. Residues 1469-1504 are disordered; it reads KNKQVEDGQDKNGQVEDQDGQDQDGQVEDQQTDGKK. The span at 1471–1482 shows a compositional bias: basic and acidic residues; it reads KQVEDGQDKNGQ. Residues 1484 to 1499 show a composition bias toward acidic residues; it reads EDQDGQDQDGQVEDQQ.

Belongs to the TIC214 family. As to quaternary structure, part of the Tic complex.

The protein resides in the plastid. Its subcellular location is the chloroplast inner membrane. Functionally, involved in protein precursor import into chloroplasts. May be part of an intermediate translocation complex acting as a protein-conducting channel at the inner envelope. This Pinus thunbergii (Japanese black pine) protein is Protein TIC 214.